Here is a 102-residue protein sequence, read N- to C-terminus: Protamine-2 (102 aa).

Residues Ser8, Ser10, and Ser37 each carry the phosphoserine modification. Residues 16 to 102 (VYGQQLRGQE…RTRRRRCRRH (87 aa)) are disordered. The segment covering 49–102 (GHSHYRRRHCSRRRLHRIHRQQHRSCGRRRRRSCRQRRRHRRGCRTRRRRCRRH) has biased composition (basic residues).

The protein belongs to the protamine P2 family. Interacts with TDRP. Proteolytic processing into mature chains is required for histone eviction during spermatogenesis. Transition proteins (TNP1 and TNP2) are required for processing. In terms of tissue distribution, testis.

The protein resides in the nucleus. Its subcellular location is the chromosome. In terms of biological role, protamines substitute for histones in the chromatin of sperm during the haploid phase of spermatogenesis. They compact sperm DNA into a highly condensed, stable and inactive complex. This Hylobates lar (Lar gibbon) protein is Protamine-2 (PRM2).